The chain runs to 154 residues: Nuclear cap-binding protein subunit 2 (154 aa).

MRNA contacts are provided by residues Tyr10, Tyr33, 102 to 106, 113 to 117, and 123 to 124; these read RCDWD, RQYGR, and QV. The region spanning 30–108 is the RRM domain; the sequence is STLYMGNLSF…RIIRCDWDAG (79 aa).

The protein belongs to the RRM NCBP2 family. In terms of assembly, component of the nuclear cap-binding complex (CBC), a heterodimer composed of Cbp80 and Cbp20 that interacts with m7GpppG-capped RNA.

It is found in the nucleus. Component of the cap-binding complex (CBC), which binds co-transcriptionally to the 5' cap of pre-mRNAs and is involved in various processes such as pre-mRNA splicing and RNA-mediated gene silencing (RNAi). The CBC complex is involved in miRNA-mediated RNA interference and is required for primary microRNAs (miRNAs) processing. Also involved in innate immunity via the short interfering RNAs (siRNAs) processing machinery by restricting the viral RNA production. In the CBC complex, Cbp20 recognizes and binds capped RNAs (m7GpppG-capped RNA) but requires Cbp80 to stabilize the movement of its N-terminal loop and lock the CBC into a high affinity cap-binding state with the cap structure. This is Nuclear cap-binding protein subunit 2 from Bombyx mori (Silk moth).